Consider the following 697-residue polypeptide: Elongation factor G (697 aa).

The tr-type G domain occupies 8-282 (EDYRNIGIMA…AIVDYLPSPL (275 aa)). GTP is bound by residues 17 to 24 (AHIDAGKT), 81 to 85 (DTPGH), and 135 to 138 (NKMD).

This sequence belongs to the TRAFAC class translation factor GTPase superfamily. Classic translation factor GTPase family. EF-G/EF-2 subfamily.

The protein localises to the cytoplasm. Functionally, catalyzes the GTP-dependent ribosomal translocation step during translation elongation. During this step, the ribosome changes from the pre-translocational (PRE) to the post-translocational (POST) state as the newly formed A-site-bound peptidyl-tRNA and P-site-bound deacylated tRNA move to the P and E sites, respectively. Catalyzes the coordinated movement of the two tRNA molecules, the mRNA and conformational changes in the ribosome. The protein is Elongation factor G of Metamycoplasma arthritidis (strain 158L3-1) (Mycoplasma arthritidis).